We begin with the raw amino-acid sequence, 341 residues long: Glyceraldehyde-3-phosphate dehydrogenase, cytosolic (341 aa).

NAD(+)-binding positions include R15–I16, D37, and R84. D-glyceraldehyde 3-phosphate-binding positions include S155 to T157, T186, T215 to G216, and R238. The active-site Nucleophile is the C156. Position 320 (N320) interacts with NAD(+).

It belongs to the glyceraldehyde-3-phosphate dehydrogenase family. Homotetramer.

Its subcellular location is the cytoplasm. It catalyses the reaction D-glyceraldehyde 3-phosphate + phosphate + NAD(+) = (2R)-3-phospho-glyceroyl phosphate + NADH + H(+). The protein operates within carbohydrate degradation; glycolysis; pyruvate from D-glyceraldehyde 3-phosphate: step 1/5. In terms of biological role, key enzyme in glycolysis that catalyzes the first step of the pathway by converting D-glyceraldehyde 3-phosphate (G3P) into 3-phospho-D-glyceroyl phosphate. Essential for the maintenance of cellular ATP levels and carbohydrate metabolism. The chain is Glyceraldehyde-3-phosphate dehydrogenase, cytosolic (GAPC) from Magnolia liliiflora (Mulan magnolia).